A 271-amino-acid chain; its full sequence is uncharacterized protein (271 aa).

The first 22 residues, 1 to 22 (MARELLFLACAIVIADSWPAKA), serve as a signal peptide directing secretion.

This is an uncharacterized protein from Sinorhizobium fredii (strain NBRC 101917 / NGR234).